The following is a 130-amino-acid chain: Phosphoribosyl-AMP cyclohydrolase (130 aa).

Asp77 contributes to the Mg(2+) binding site. Cys78 contacts Zn(2+). Mg(2+)-binding residues include Asp79 and Asp81. Zn(2+) contacts are provided by Cys95 and Cys102.

The protein belongs to the PRA-CH family. As to quaternary structure, homodimer. The cofactor is Mg(2+). It depends on Zn(2+) as a cofactor.

It is found in the cytoplasm. It carries out the reaction 1-(5-phospho-beta-D-ribosyl)-5'-AMP + H2O = 1-(5-phospho-beta-D-ribosyl)-5-[(5-phospho-beta-D-ribosylamino)methylideneamino]imidazole-4-carboxamide. Its pathway is amino-acid biosynthesis; L-histidine biosynthesis; L-histidine from 5-phospho-alpha-D-ribose 1-diphosphate: step 3/9. In terms of biological role, catalyzes the hydrolysis of the adenine ring of phosphoribosyl-AMP. The polypeptide is Phosphoribosyl-AMP cyclohydrolase (Pseudomonas savastanoi pv. phaseolicola (strain 1448A / Race 6) (Pseudomonas syringae pv. phaseolicola (strain 1448A / Race 6))).